Here is a 179-residue protein sequence, read N- to C-terminus: ATP synthase subunit delta (179 aa).

This sequence belongs to the ATPase delta chain family. In terms of assembly, F-type ATPases have 2 components, F(1) - the catalytic core - and F(0) - the membrane proton channel. F(1) has five subunits: alpha(3), beta(3), gamma(1), delta(1), epsilon(1). F(0) has three main subunits: a(1), b(2) and c(10-14). The alpha and beta chains form an alternating ring which encloses part of the gamma chain. F(1) is attached to F(0) by a central stalk formed by the gamma and epsilon chains, while a peripheral stalk is formed by the delta and b chains.

The protein localises to the cell inner membrane. In terms of biological role, f(1)F(0) ATP synthase produces ATP from ADP in the presence of a proton or sodium gradient. F-type ATPases consist of two structural domains, F(1) containing the extramembraneous catalytic core and F(0) containing the membrane proton channel, linked together by a central stalk and a peripheral stalk. During catalysis, ATP synthesis in the catalytic domain of F(1) is coupled via a rotary mechanism of the central stalk subunits to proton translocation. This protein is part of the stalk that links CF(0) to CF(1). It either transmits conformational changes from CF(0) to CF(1) or is implicated in proton conduction. The protein is ATP synthase subunit delta of Acidithiobacillus ferrooxidans (strain ATCC 23270 / DSM 14882 / CIP 104768 / NCIMB 8455) (Ferrobacillus ferrooxidans (strain ATCC 23270)).